Reading from the N-terminus, the 83-residue chain is NAD(P)H-quinone oxidoreductase subunit L (83 aa).

2 helical membrane passes run 17–37 (VLLA…LALL) and 53–73 (TAIY…APFI).

This sequence belongs to the complex I NdhL subunit family. NDH-1 can be composed of about 15 different subunits; different subcomplexes with different compositions have been identified which probably have different functions.

It is found in the cellular thylakoid membrane. The catalysed reaction is a plastoquinone + NADH + (n+1) H(+)(in) = a plastoquinol + NAD(+) + n H(+)(out). It catalyses the reaction a plastoquinone + NADPH + (n+1) H(+)(in) = a plastoquinol + NADP(+) + n H(+)(out). Its function is as follows. NDH-1 shuttles electrons from an unknown electron donor, via FMN and iron-sulfur (Fe-S) centers, to quinones in the respiratory and/or the photosynthetic chain. The immediate electron acceptor for the enzyme in this species is believed to be plastoquinone. Couples the redox reaction to proton translocation, and thus conserves the redox energy in a proton gradient. Cyanobacterial NDH-1 also plays a role in inorganic carbon-concentration. The protein is NAD(P)H-quinone oxidoreductase subunit L of Synechococcus sp. (strain RCC307).